Reading from the N-terminus, the 200-residue chain is Recombination protein RecR (200 aa).

The C4-type zinc finger occupies 57–72 (CEHCRTFTEEDICSIC). The Toprim domain occupies 81–176 (RLLCVVEMPA…KVSRIAHGIP (96 aa)).

The protein belongs to the RecR family.

May play a role in DNA repair. It seems to be involved in an RecBC-independent recombinational process of DNA repair. It may act with RecF and RecO. In Mannheimia succiniciproducens (strain KCTC 0769BP / MBEL55E), this protein is Recombination protein RecR.